Reading from the N-terminus, the 66-residue chain is Beta-mammal toxin Css2 (66 aa).

An LCN-type CS-alpha/beta domain is found at 1-66; it reads KEGYLVSKST…VWPLPNKTCN (66 aa). Intrachain disulfides connect Cys-12–Cys-65, Cys-16–Cys-41, Cys-25–Cys-46, and Cys-29–Cys-48. Asparagine amide is present on Asn-66.

This sequence belongs to the long (4 C-C) scorpion toxin superfamily. Sodium channel inhibitor family. Beta subfamily. Post-translationally, C-terminal amidation increases its affinity for sodium channels. As to expression, expressed by the venom gland.

It is found in the secreted. Beta toxin that binds site-4 of sodium channels (Nav) and reduces peak current (observed on Nav1.6/SCN8A (IC(50)=307 nM)), shifts the voltage of activation toward more negative potentials (observed on Nav1.6, Nav1.1 (weak), Nav1.2 (weak), and Nav1.7 (weak)), and induces resurgent currents at negative voltages following brief and strong depolarizations (observed on Nav1.6, Nav1.1 (weak), and Nav1.7 (weak)). A reduction of peak current of Nav1.5/SCN7A has been observed in another study (IC(50)=35-40 nM). This toxin is only active on mammals. It has been shown to bind phospholipids. This is Beta-mammal toxin Css2 from Centruroides suffusus (Durango bark scorpion).